The sequence spans 243 residues: Protein canopy homolog 3 (243 aa).

Positions 1–15 (MWFLFLLLPLWAGCA) are cleaved as a signal peptide. Positions 27 to 236 (SKCEVCKYVA…KEEKKQMDQP (210 aa)) constitute a Saposin B-type domain. 3 cysteine pairs are disulfide-bonded: Cys-29/Cys-188, Cys-32/Cys-176, and Cys-86/Cys-148. A coiled-coil region spans residues 136 to 160 (ETSAEVADMKKQCDVMMENYEEVIE). The disordered stretch occupies residues 186-243 (QSCLSEQGDSRKGDTGPSTGTKKQKKQGEKKNKSKKQNSGSKEEKKQMDQPMAAKEEL). A compositionally biased stretch (basic and acidic residues) spans 226–243 (SKEEKKQMDQPMAAKEEL).

Belongs to the canopy family.

Its subcellular location is the endoplasmic reticulum. Its function is as follows. Toll-like receptor (TLR)-specific co-chaperone for HSP90B1. Required for proper TLR folding and hence controls TLR exit from the endoplasmic reticulum. Consequently, required for immune responses. The chain is Protein canopy homolog 3 (cnpy3) from Xenopus laevis (African clawed frog).